The primary structure comprises 331 residues: Probable staphylococcal-like nuclease CAN1 (331 aa).

G2 is lipidated: N-myristoyl glycine. The S-palmitoyl cysteine moiety is linked to residue C10. The region spanning 136–313 is the TNase-like domain; that stretch reads HTLPVDAKAV…QSGRKGLWAA (178 aa). Ca(2+) is bound at residue D149. R220 is a catalytic residue. D225 serves as a coordination point for Ca(2+). Catalysis depends on residues E228 and R262. Positions 306–331 are disordered; that stretch reads GRKGLWAASRPQKPWEWRRDKRNGTA. Residues 318 to 331 show a composition bias toward basic and acidic residues; sequence KPWEWRRDKRNGTA.

This sequence belongs to the thermonuclease family. Requires Ca(2+) as cofactor.

The protein localises to the cell membrane. Functionally, enzyme that catalyzes the hydrolysis of both DNA and RNA at the 5' position of the phosphodiester bond. The sequence is that of Probable staphylococcal-like nuclease CAN1 from Oryza sativa subsp. japonica (Rice).